We begin with the raw amino-acid sequence, 554 residues long: 5'-AMP-activated protein kinase catalytic subunit alpha-1 (554 aa).

A Protein kinase domain is found at 22 to 274 (YILGDTLGVG…IKDIREHEWF (253 aa)). Thr-27 is modified (phosphothreonine). Residues 28 to 36 (LGVGTFGKV) and Lys-51 each bind ATP. Asp-145 (proton acceptor) is an active-site residue. Phosphothreonine; by LKB1 and CaMKK2 is present on Thr-178. Thr-264 and Thr-350 each carry phosphothreonine. The interval 297–376 (EALKEVCEKF…PERVPFLVAE (80 aa)) is AIS. Ser-351 is subject to Phosphoserine. Phosphoserine; by ULK1 is present on Ser-355. At Thr-363 the chain carries Phosphothreonine; by ULK1. The residue at position 377 (Thr-377) is a Phosphothreonine. At Ser-392 the chain carries Phosphoserine; by ULK1. The residue at position 462 (Ser-462) is a Phosphoserine. Residues 480 to 500 (KSGTATPQRSGSVSNYRSCQR) are compositionally biased toward polar residues. The segment at 480–531 (KSGTATPQRSGSVSNYRSCQRSDSDAEAQGKSSEVSLTSSVTSLDSSPVDLT) is disordered. Phosphoserine; by ULK1 is present on Ser-481. The residue at position 483 (Thr-483) is a Phosphothreonine; by ULK1. Position 485 is a phosphothreonine (Thr-485). A phosphoserine mark is found at Ser-491, Ser-503, Ser-519, and Ser-522. Low complexity predominate over residues 511-530 (SSEVSLTSSVTSLDSSPVDL).

Belongs to the protein kinase superfamily. CAMK Ser/Thr protein kinase family. SNF1 subfamily. In terms of assembly, AMPK is a heterotrimer of an alpha catalytic subunit (PRKAA1 or PRKAA2), a beta (PRKAB1 or PRKAB2) and a gamma non-catalytic subunits (PRKAG1, PRKAG2 or PRKAG3). Interacts with FNIP1 and FNIP2. Mg(2+) is required as a cofactor. Post-translationally, ubiquitinated. Phosphorylated at Thr-183 by STK11/LKB1 in complex with STE20-related adapter-alpha (STRADA) pseudo kinase and CAB39. Also phosphorylated at Thr-183 by CAMKK2; triggered by a rise in intracellular calcium ions, without detectable changes in the AMP/ATP ratio. CAMKK1 can also phosphorylate Thr-183, but at a much lower level. Dephosphorylated by protein phosphatase 2A and 2C (PP2A and PP2C). Phosphorylated by ULK1 and ULK2; leading to negatively regulate AMPK activity and suggesting the existence of a regulatory feedback loop between ULK1, ULK2 and AMPK. Dephosphorylated by PPM1A and PPM1B. In terms of processing, glycosylated; O-GlcNAcylated by OGT, promoting the AMP-activated protein kinase (AMPK) activity.

The protein resides in the cytoplasm. The protein localises to the nucleus. The enzyme catalyses L-seryl-[protein] + ATP = O-phospho-L-seryl-[protein] + ADP + H(+). It catalyses the reaction L-threonyl-[protein] + ATP = O-phospho-L-threonyl-[protein] + ADP + H(+). The catalysed reaction is L-seryl-[acetyl-CoA carboxylase] + ATP = O-phospho-L-seryl-[acetyl-CoA carboxylase] + ADP + H(+). It carries out the reaction L-seryl-[3-hydroxy-3-methylglutaryl-coenzyme A reductase] + ATP = O-phospho-L-seryl-[3-hydroxy-3-methylglutaryl-coenzyme A reductase] + ADP + H(+). The enzyme catalyses L-seryl-[tau protein] + ATP = O-phospho-L-seryl-[tau protein] + ADP + H(+). It catalyses the reaction L-threonyl-[tau protein] + ATP = O-phospho-L-threonyl-[tau protein] + ADP + H(+). With respect to regulation, activated by phosphorylation on Thr-183. Binding of AMP to non-catalytic gamma subunit (PRKAG1, PRKAG2 or PRKAG3) results in allosteric activation, inducing phosphorylation on Thr-183. AMP-binding to gamma subunit also sustains activity by preventing dephosphorylation of Thr-183. ADP also stimulates Thr-183 phosphorylation, without stimulating already phosphorylated AMPK. ATP promotes dephosphorylation of Thr-183, rendering the enzyme inactive. Under physiological conditions AMPK mainly exists in its inactive form in complex with ATP, which is much more abundant than AMP. Selectively inhibited by compound C (6-[4-(2-Piperidin-1-yl-ethoxy)-phenyl)]-3-pyridin-4-yl-pyyrazolo[1,5-a] pyrimidine. Activated by resveratrol, a natural polyphenol present in red wine, and S17834, a synthetic polyphenol. In terms of biological role, catalytic subunit of AMP-activated protein kinase (AMPK), an energy sensor protein kinase that plays a key role in regulating cellular energy metabolism. In response to reduction of intracellular ATP levels, AMPK activates energy-producing pathways and inhibits energy-consuming processes: inhibits protein, carbohydrate and lipid biosynthesis, as well as cell growth and proliferation. AMPK acts via direct phosphorylation of metabolic enzymes, and by longer-term effects via phosphorylation of transcription regulators. Regulates lipid synthesis by phosphorylating and inactivating lipid metabolic enzymes such as ACACA, ACACB, GYS1, HMGCR and LIPE; regulates fatty acid and cholesterol synthesis by phosphorylating acetyl-CoA carboxylase (ACACA and ACACB) and hormone-sensitive lipase (LIPE) enzymes, respectively. Promotes lipolysis of lipid droplets by mediating phosphorylation of isoform 1 of CHKA (CHKalpha2). Regulates insulin-signaling and glycolysis by phosphorylating IRS1, PFKFB2 and PFKFB3. AMPK stimulates glucose uptake in muscle by increasing the translocation of the glucose transporter SLC2A4/GLUT4 to the plasma membrane, possibly by mediating phosphorylation of TBC1D4/AS160. Regulates transcription and chromatin structure by phosphorylating transcription regulators involved in energy metabolism such as CRTC2/TORC2, FOXO3, histone H2B, HDAC5, MEF2C, MLXIPL/ChREBP, EP300, HNF4A, p53/TP53, SREBF1, SREBF2 and PPARGC1A. Acts as a key regulator of glucose homeostasis in liver by phosphorylating CRTC2/TORC2, leading to CRTC2/TORC2 sequestration in the cytoplasm. In response to stress, phosphorylates 'Ser-36' of histone H2B (H2BS36ph), leading to promote transcription. Acts as a key regulator of cell growth and proliferation by phosphorylating FNIP1, TSC2, RPTOR, WDR24 and ATG1/ULK1: in response to nutrient limitation, negatively regulates the mTORC1 complex by phosphorylating RPTOR component of the mTORC1 complex and by phosphorylating and activating TSC2. Also phosphorylates and inhibits GATOR2 subunit WDR24 in response to nutrient limitation, leading to suppress glucose-mediated mTORC1 activation. In response to energetic stress, phosphorylates FNIP1, inactivating the non-canonical mTORC1 signaling, thereby promoting nuclear translocation of TFEB and TFE3, and inducing transcription of lysosomal or autophagy genes. In response to nutrient limitation, promotes autophagy by phosphorylating and activating ATG1/ULK1. In that process also activates WDR45/WIPI4. Phosphorylates CASP6, thereby preventing its autoprocessing and subsequent activation. In response to nutrient limitation, phosphorylates transcription factor FOXO3 promoting FOXO3 mitochondrial import. Also acts as a regulator of cellular polarity by remodeling the actin cytoskeleton; probably by indirectly activating myosin. AMPK also acts as a regulator of circadian rhythm by mediating phosphorylation of CRY1, leading to destabilize it. May regulate the Wnt signaling pathway by phosphorylating CTNNB1, leading to stabilize it. Also has tau-protein kinase activity: in response to amyloid beta A4 protein (APP) exposure, activated by CAMKK2, leading to phosphorylation of MAPT/TAU; however the relevance of such data remains unclear in vivo. Also phosphorylates CFTR, EEF2K, KLC1, NOS3 and SLC12A1. Regulates hepatic lipogenesis. Activated via SIRT3, represses sterol regulatory element-binding protein (SREBP) transcriptional activities and ATP-consuming lipogenesis to restore cellular energy balance. Upon stress, regulates mitochondrial fragmentation through phosphorylation of MTFR1L. The sequence is that of 5'-AMP-activated protein kinase catalytic subunit alpha-1 (PRKAA1) from Pongo abelii (Sumatran orangutan).